Here is a 257-residue protein sequence, read N- to C-terminus: Thiazole synthase (257 aa).

The Schiff-base intermediate with DXP role is filled by Lys96. 1-deoxy-D-xylulose 5-phosphate is bound by residues Gly157, 184–185 (AG), and 206–207 (NT).

The protein belongs to the ThiG family. In terms of assembly, homotetramer. Forms heterodimers with either ThiH or ThiS.

The protein resides in the cytoplasm. The enzyme catalyses [ThiS sulfur-carrier protein]-C-terminal-Gly-aminoethanethioate + 2-iminoacetate + 1-deoxy-D-xylulose 5-phosphate = [ThiS sulfur-carrier protein]-C-terminal Gly-Gly + 2-[(2R,5Z)-2-carboxy-4-methylthiazol-5(2H)-ylidene]ethyl phosphate + 2 H2O + H(+). It participates in cofactor biosynthesis; thiamine diphosphate biosynthesis. In terms of biological role, catalyzes the rearrangement of 1-deoxy-D-xylulose 5-phosphate (DXP) to produce the thiazole phosphate moiety of thiamine. Sulfur is provided by the thiocarboxylate moiety of the carrier protein ThiS. In vitro, sulfur can be provided by H(2)S. The sequence is that of Thiazole synthase from Bartonella henselae (strain ATCC 49882 / DSM 28221 / CCUG 30454 / Houston 1) (Rochalimaea henselae).